The sequence spans 176 residues: RNA 2',3'-cyclic phosphodiesterase (176 aa).

His39 functions as the Proton donor in the catalytic mechanism. 2 consecutive short sequence motifs (HXTX) follow at residues 39-42 (HITL) and 122-125 (HLTV). Residue His122 is the Proton acceptor of the active site.

The protein belongs to the 2H phosphoesterase superfamily. ThpR family.

The catalysed reaction is a 3'-end 2',3'-cyclophospho-ribonucleotide-RNA + H2O = a 3'-end 2'-phospho-ribonucleotide-RNA + H(+). Its function is as follows. Hydrolyzes RNA 2',3'-cyclic phosphodiester to an RNA 2'-phosphomonoester. The protein is RNA 2',3'-cyclic phosphodiesterase of Archaeoglobus fulgidus (strain ATCC 49558 / DSM 4304 / JCM 9628 / NBRC 100126 / VC-16).